The sequence spans 148 residues: Mobilization protein MobB (148 aa).

Functionally, this protein is essential to promote the specific transfer of the plasmid in the presence of conjugative plasmids. This chain is Mobilization protein MobB (mobB), found in Escherichia coli.